The sequence spans 573 residues: uncharacterized protein (573 aa).

2 disordered regions span residues 1-33 (MLQQ…SIPR) and 60-101 (LVAN…SRYD). Polar residues predominate over residues 60-70 (LVANRSDNNGN). N-linked (GlcNAc...) asparagine glycosylation occurs at Asn63. Residues 84 to 95 (SSSTSSLPSTRN) show a composition bias toward low complexity. 10 repeat units span residues 102-103 (NM), 104-105 (NM), 106-107 (NM), 108-109 (NM), 110-111 (NM), 112-113 (NM), 114-115 (NM), 116-117 (NM), 118-119 (NM), and 120-121 (NM). Residues 102–121 (NMNMNMNMNMNMNMNMNMNM) form a 10 X 2 AA tandem repeats of N-M region. Asn123 carries an N-linked (GlcNAc...) asparagine glycan. 4 disordered regions span residues 150–174 (IPEK…PRVR), 192–271 (QFPN…IRSN), 286–317 (KSSN…PITS), and 357–379 (NNRI…DKRT). Positions 157–170 (SRYSLRSSPPTYSN) are enriched in polar residues. Positions 208–225 (LPPSSTFPDSPSSSSLPL) are enriched in low complexity. A compositionally biased stretch (polar residues) spans 226 to 252 (TQTGGPSSADNDSIATGTNNRSPQQTK). An N-linked (GlcNAc...) asparagine glycan is attached at Asn236. 2 N-linked (GlcNAc...) asparagine glycosylation sites follow: Asn437 and Asn442. Composition is skewed to low complexity over residues 441–457 (INSS…SSSS) and 466–483 (SISS…SKSK). The disordered stretch occupies residues 441 to 483 (INSSISSPAPSSSSSSSLVSRGPMQSISSSPTPAPSSGSSKSK). Residues Asn498, Asn535, and Asn541 are each glycosylated (N-linked (GlcNAc...) asparagine).

The protein to yeast AFR1. Post-translationally, N-glycosylated.

This is an uncharacterized protein from Saccharomyces cerevisiae (strain ATCC 204508 / S288c) (Baker's yeast).